A 91-amino-acid chain; its full sequence is Acylphosphatase (91 aa).

The Acylphosphatase-like domain occupies 5 to 91 (CSKFIVSGHV…EHDYQGFEIL (87 aa)). Residue asparagine 38 is part of the active site.

Belongs to the acylphosphatase family.

The catalysed reaction is an acyl phosphate + H2O = a carboxylate + phosphate + H(+). The chain is Acylphosphatase (acyP) from Vibrio cholerae serotype O1 (strain ATCC 39541 / Classical Ogawa 395 / O395).